We begin with the raw amino-acid sequence, 226 residues long: ATP synthase subunit a 1 (226 aa).

The next 5 membrane-spanning stretches (helical) occupy residues L20–T40, Y78–I98, A113–V133, M174–L194, and L196–A216.

Belongs to the ATPase A chain family. In terms of assembly, F-type ATPases have 2 components, CF(1) - the catalytic core - and CF(0) - the membrane proton channel. CF(1) has five subunits: alpha(3), beta(3), gamma(1), delta(1), epsilon(1). CF(0) has four main subunits: a, b, b' and c.

The protein localises to the cell inner membrane. Its function is as follows. Key component of the proton channel; it plays a direct role in the translocation of protons across the membrane. The polypeptide is ATP synthase subunit a 1 (Chlorobaculum parvum (strain DSM 263 / NCIMB 8327) (Chlorobium vibrioforme subsp. thiosulfatophilum)).